Reading from the N-terminus, the 518-residue chain is D-aminopeptidase (518 aa).

Residue Ser62 is the Nucleophile of the active site. Lys65 acts as the Proton donor/acceptor in catalysis. The interval 373-392 is disordered; that stretch reads FGTGPEKMDISGENEAQSSM. Residues 477–487 are important for specificity; sequence QRSMDAPSPGE. Asp481 contacts substrate.

It belongs to the peptidase S12 family. In terms of assembly, homodimer.

It carries out the reaction Release of an N-terminal D-amino acid from a peptide, Xaa-|-Yaa-, in which Xaa is preferably D-Ala, D-Ser or D-Thr. D-amino acid amides and methyl esters also are hydrolyzed, as is glycine amide.. With respect to regulation, inhibited by beta-lactam compounds such as 6-aminopenicillic acid, 7-aminocephalosporanic acid, benzylpenicillin and ampicillin. Inhibited by p-chloromercuribenzoate. Functionally, hydrolyzes N-terminal residues in D-amino acid-containing peptides. The sequence is that of D-aminopeptidase from Brucella melitensis biotype 1 (strain ATCC 23456 / CCUG 17765 / NCTC 10094 / 16M).